An 88-amino-acid chain; its full sequence is Large ribosomal subunit protein eL31 (88 aa).

This sequence belongs to the eukaryotic ribosomal protein eL31 family.

This Archaeoglobus fulgidus (strain ATCC 49558 / DSM 4304 / JCM 9628 / NBRC 100126 / VC-16) protein is Large ribosomal subunit protein eL31 (rpl31e).